A 244-amino-acid chain; its full sequence is uncharacterized protein (244 aa).

The first 17 residues, 1 to 17 (MVLHVITALLSIGLCYG), serve as a signal peptide directing secretion.

As to expression, component of the acid-soluble and acid-insoluble organic matrix of prismatic shell layers (at protein level).

Its subcellular location is the secreted. This is an uncharacterized protein from Haliotis asinina (Donkey's ear abalone).